A 642-amino-acid chain; its full sequence is Putative ATP-binding protein YdiF (642 aa).

2 consecutive ABC transporter domains span residues 4 to 259 (LQVN…EKDL) and 327 to 541 (LRVQ…ELEK). Residues 36-43 (GRNGAGKS) and 360-367 (GPNGIGKS) each bind ATP. Basic and acidic residues-rich tracts occupy residues 541–550 (KMNQQEETDK) and 557–567 (SDSKRSYEEEK). The interval 541-567 (KMNQQEETDKTPATVKSDSKRSYEEEK) is disordered.

The protein belongs to the ABC transporter superfamily. ABCF family. YdiF subfamily.

This is Putative ATP-binding protein YdiF (ydiF) from Bacillus subtilis (strain 168).